The following is a 347-amino-acid chain: GMP reductase (347 aa).

108–131 (ADFQKTKDIMAISDEFIFICIDIA) is a binding site for NADP(+). K(+) is bound by residues G181 and G183. C186 serves as the catalytic Thioimidate intermediate. NADP(+) is bound at residue 216–239 (IIGDGGCSCAGDVAKAFGGGADFV).

Belongs to the IMPDH/GMPR family. GuaC type 1 subfamily. Homotetramer.

It catalyses the reaction IMP + NH4(+) + NADP(+) = GMP + NADPH + 2 H(+). Its function is as follows. Catalyzes the irreversible NADPH-dependent deamination of GMP to IMP. It functions in the conversion of nucleobase, nucleoside and nucleotide derivatives of G to A nucleotides, and in maintaining the intracellular balance of A and G nucleotides. The chain is GMP reductase from Vibrio campbellii (strain ATCC BAA-1116).